The following is a 624-amino-acid chain: tRNA uridine 5-carboxymethylaminomethyl modification enzyme MnmG (624 aa).

14–19 provides a ligand contact to FAD; sequence GAGHAG. 273–287 contributes to the NAD(+) binding site; the sequence is GTRYCPSFEDKVVRF.

Belongs to the MnmG family. As to quaternary structure, homodimer. Heterotetramer of two MnmE and two MnmG subunits. Requires FAD as cofactor.

The protein resides in the cytoplasm. Its function is as follows. NAD-binding protein involved in the addition of a carboxymethylaminomethyl (cmnm) group at the wobble position (U34) of certain tRNAs, forming tRNA-cmnm(5)s(2)U34. The polypeptide is tRNA uridine 5-carboxymethylaminomethyl modification enzyme MnmG (Syntrophomonas wolfei subsp. wolfei (strain DSM 2245B / Goettingen)).